The sequence spans 740 residues: MRQTLPLLLLTVLRPSWADPPQEKVPLFRVTQQGPWGSSGSNATDSPCEGLPAADATALTLANRNLERLPGCLPRTLRSLDASHNLLRALSTSELGHLEQLQVLTLRHNRIAALRWGPGGPAGLHTLDLSYNQLAALPPCTGPALSSLRALALAGNPLRALQPRAFACFPALQLLNLSCTALGRGAQGGIAEAAFAGEDGAPLVTLEVLDLSGTFLERVESGWIRDLPKLTSLYLRKMPRLTTLEGDIFKMTPNLQQLDCQDSPALASVATHIFQDTPHLQVLLFQNCNLSSFPPWTLDSSQVLSINLFGNPLTCSCDLSWLLTDAKRTVLSRAADTMCAPAAGSSGPFSASLSLSQLPGVCQSDQSTTLGASHPPCFNRSTYAQGTTVAPSAAPATRPAGDQQSVSKAPNVGSRTIAAWPHSDAREGTAPSTTNSVAGHSNSSVFPRAASTTRTQHRGEHAPELVLEPDISAASTPLASKLLGPFPTSWDRSISSPQPGQRTHATPQAPNPSLSEGEIPVLLLDDYSEEEEGRKEEVGTPHQDVPCDYHPCKHLQTPCAELQRRWRCRCPGLSGEDTIPDPPRLQGVTETTDTSALVHWCAPNSVVHGYQIRYSAEGWAGNQSVVGVIYATARQHPLYGLSPGTTYRVCVLAANRAGLSQPRSSGWRSPCAAFTTKPSFALLLSGLCAASGLLLASTVVLSACLCRRGQTLGLQRCDTHLVAYKNPAFDDYPLGLQTVS.

The first 18 residues, 1–18 (MRQTLPLLLLTVLRPSWA), serve as a signal peptide directing secretion. Residues 19–679 (DPPQEKVPLF…PCAAFTTKPS (661 aa)) lie on the Extracellular side of the membrane. A glycan (N-linked (GlcNAc...) asparagine) is linked at N42. 10 LRR repeats span residues 51–74 (LPAA…GCLP), 75–97 (RTLR…ELGH), 98–123 (LEQL…GPAG), 125–144 (HTLD…TGPA), 145–168 (LSSL…AFAC), 174–197 (LLNL…AFAG), 203–226 (LVTL…WIRD), 228–251 (PKLT…IFKM), 253–276 (PNLQ…IFQD), and 277–300 (TPHL…TLDS). N-linked (GlcNAc...) asparagine glycosylation is present at N176. N289, N379, and N442 each carry an N-linked (GlcNAc...) asparagine glycan. The segment at 389–517 (VAPSAAPATR…QAPNPSLSEG (129 aa)) is disordered. 2 stretches are compositionally biased toward polar residues: residues 430–454 (APST…STTR) and 490–514 (WDRS…NPSL). Residues 579–679 (IPDPPRLQGV…PCAAFTTKPS (101 aa)) enclose the Fibronectin type-III domain. An N-linked (GlcNAc...) asparagine glycan is attached at N622. A helical membrane pass occupies residues 680–700 (FALLLSGLCAASGLLLASTVV). Over 701–740 (LSACLCRRGQTLGLQRCDTHLVAYKNPAFDDYPLGLQTVS) the chain is Cytoplasmic.

The protein localises to the membrane. In terms of biological role, may play an important role in hippocampus-dependent long-lasting memory. This Homo sapiens (Human) protein is Leucine-rich repeat neuronal protein 4 (LRRN4).